Here is a 266-residue protein sequence, read N- to C-terminus: Short-chain dehydrogenase/reductase atnB (266 aa).

Residues isoleucine 13, aspartate 57, and asparagine 85 each coordinate NADP(+). Residues serine 147 and tyrosine 166 each act as proton donor in the active site. Tyrosine 166, lysine 170, valine 199, and threonine 201 together coordinate NADP(+). Catalysis depends on lysine 170, which acts as the Lowers pKa of active site Tyr.

The protein belongs to the short-chain dehydrogenases/reductases (SDR) family.

It participates in secondary metabolite biosynthesis; terpenoid biosynthesis. Functionally, short-chain dehydrogenase/reductase; part of the gene cluster that mediates the biosynthesis of the meroterpenoids arthripenoids. The pathway begins with the HR-PKS atnH that catalyzes two chain-extension steps to form a reduced triketide, which then primes the SAT domain in the NR-PKS atnG to initiate three more cycles of extension to give a linear hexaketide corresponding to the polyketide part of arthripenoids. The FAD-dependent monooxygenase atnJ then performs an oxidative decarboxylation at C11 of the atnH/atnG product, via an electrophilic aromatic hydroxylation with concomitant ipso-decarboxylation. The membrane-bound polyprenyl transferase atnF then introduces a farnesyl group before the FAD-dependent monooxygenase atnK functions as the first epoxidase on terminal C12'-C13' olefin, followed by a second epoxidation on C7'-C8' catalyzed by atnA. The terpene cyclase/mutase atnI then initiates the sequential tricyclic ring formation through protonation of the terminal epoxide and catalyzes the regioselective and stereoselective 6/6/6-tricyclic ring formation. The cytochrome P450 monooxygenase atnM is responsible for hydroxylating both C1' and C10'. The next steps may involve ketoreduction and acetyl transfer by the ketoreductase atnB and the acetyltransferase atnC, and lead to the production of arthripenoid B, the final biosynthetic product of the atn cluster. The hydroquinone moiety in arthripenoid B is prone to undergo spontaneous oxidation to afford a benzoquinone compound, a key intermediate for generating structure diversity. For instance, addition of a cysteine followed by ring contraction gives arthripenoid A, tautomerization gives the main product arthripenoid C, addition of a molecular of water or amine affords arthripenoid D or E, respectively, and loss of one water forms arthripenoid F. In Arthrinium sp, this protein is Short-chain dehydrogenase/reductase atnB.